Here is a 130-residue protein sequence, read N- to C-terminus: Protein ApaG (130 aa).

One can recognise an ApaG domain in the interval 3–127 (EHESCGVRIS…FSLDRPSDRL (125 aa)).

The polypeptide is Protein ApaG (Maricaulis maris (strain MCS10) (Caulobacter maris)).